The chain runs to 316 residues: tRNA dimethylallyltransferase (316 aa).

9 to 16 is a binding site for ATP; sequence GPTASGKS. 11–16 provides a ligand contact to substrate; the sequence is TASGKS. Interaction with substrate tRNA stretches follow at residues 34–37 and 158–162; these read DSMQ and QRLAR.

Belongs to the IPP transferase family. In terms of assembly, monomer. Requires Mg(2+) as cofactor.

The catalysed reaction is adenosine(37) in tRNA + dimethylallyl diphosphate = N(6)-dimethylallyladenosine(37) in tRNA + diphosphate. Catalyzes the transfer of a dimethylallyl group onto the adenine at position 37 in tRNAs that read codons beginning with uridine, leading to the formation of N6-(dimethylallyl)adenosine (i(6)A). This is tRNA dimethylallyltransferase from Hyphomonas neptunium (strain ATCC 15444).